The primary structure comprises 247 residues: Probable transcriptional regulatory protein PBPRA1113 (247 aa).

It belongs to the TACO1 family.

It localises to the cytoplasm. This is Probable transcriptional regulatory protein PBPRA1113 from Photobacterium profundum (strain SS9).